A 388-amino-acid polypeptide reads, in one-letter code: Acyl-CoA dehydrogenase fadE12 (388 aa).

This sequence belongs to the acyl-CoA dehydrogenase family. FAD serves as cofactor.

The enzyme catalyses a 2,3-saturated acyl-CoA + A = a 2,3-dehydroacyl-CoA + AH2. In Mycobacterium bovis (strain ATCC BAA-935 / AF2122/97), this protein is Acyl-CoA dehydrogenase fadE12 (fadE12).